The following is a 286-amino-acid chain: Acetyl-coenzyme A carboxylase carboxyl transferase subunit beta (286 aa).

One can recognise a CoA carboxyltransferase N-terminal domain in the interval 27-286; the sequence is LMTKCPKCKL…HSEETNHATI (260 aa). Zn(2+)-binding residues include C31, C34, C50, and C52. The C4-type zinc finger occupies 31 to 52; that stretch reads CPKCKLIQYTKQLEANLKVCVC.

It belongs to the AccD/PCCB family. In terms of assembly, acetyl-CoA carboxylase is a heterohexamer composed of biotin carboxyl carrier protein (AccB), biotin carboxylase (AccC) and two subunits each of ACCase subunit alpha (AccA) and ACCase subunit beta (AccD). Zn(2+) serves as cofactor.

The protein resides in the cytoplasm. It catalyses the reaction N(6)-carboxybiotinyl-L-lysyl-[protein] + acetyl-CoA = N(6)-biotinyl-L-lysyl-[protein] + malonyl-CoA. It participates in lipid metabolism; malonyl-CoA biosynthesis; malonyl-CoA from acetyl-CoA: step 1/1. Component of the acetyl coenzyme A carboxylase (ACC) complex. Biotin carboxylase (BC) catalyzes the carboxylation of biotin on its carrier protein (BCCP) and then the CO(2) group is transferred by the transcarboxylase to acetyl-CoA to form malonyl-CoA. The polypeptide is Acetyl-coenzyme A carboxylase carboxyl transferase subunit beta (Exiguobacterium sibiricum (strain DSM 17290 / CCUG 55495 / CIP 109462 / JCM 13490 / 255-15)).